A 64-amino-acid polypeptide reads, in one-letter code: Large ribosomal subunit protein uL29 (64 aa).

This sequence belongs to the universal ribosomal protein uL29 family.

The protein is Large ribosomal subunit protein uL29 of Pseudomonas entomophila (strain L48).